The chain runs to 307 residues: Streptomycin 6-kinase (307 aa).

133 to 145 (LAGLLNRLHSVPA) is a streptomycin binding site. D201 (proton acceptor) is an active-site residue.

Belongs to the aminoglycoside phosphotransferase family.

The enzyme catalyses streptomycin + ATP = streptomycin 6-phosphate + ADP + H(+). In terms of biological role, the aminoglycoside phosphotransferases achieve inactivation of their antibiotic substrates by phosphorylation. In Streptomyces griseus, this protein is Streptomycin 6-kinase (aphD).